The chain runs to 145 residues: Putative pre-16S rRNA nuclease (145 aa).

It belongs to the YqgF nuclease family.

The protein resides in the cytoplasm. Could be a nuclease involved in processing of the 5'-end of pre-16S rRNA. This Microcystis aeruginosa (strain NIES-843 / IAM M-2473) protein is Putative pre-16S rRNA nuclease.